An 879-amino-acid chain; its full sequence is Leucine--tRNA ligase (879 aa).

Residues 45 to 55 (PYPSGALHMGH) carry the 'HIGH' region motif. The 'KMSKS' region motif lies at 637 to 641 (KMSKS). K640 is an ATP binding site.

The protein belongs to the class-I aminoacyl-tRNA synthetase family.

The protein localises to the cytoplasm. It catalyses the reaction tRNA(Leu) + L-leucine + ATP = L-leucyl-tRNA(Leu) + AMP + diphosphate. This Xylella fastidiosa (strain 9a5c) protein is Leucine--tRNA ligase.